The chain runs to 51 residues: Conotoxin Cal6.33 (51 aa).

The first 22 residues, 1–22 (MKLTCVVIIAVLILTACQFTTA), serve as a signal peptide directing secretion. 3 cysteine pairs are disulfide-bonded: cysteine 25/cysteine 39, cysteine 32/cysteine 43, and cysteine 38/cysteine 50.

This sequence belongs to the conotoxin O1 superfamily. As to expression, expressed by the venom duct.

Its subcellular location is the secreted. Functionally, probable neurotoxin. This Californiconus californicus (California cone) protein is Conotoxin Cal6.33.